The sequence spans 262 residues: Adenosylcobinamide-GDP ribazoletransferase (262 aa).

The next 6 helical transmembrane spans lie at 43-63 (YFGL…WLTQ), 66-86 (LPAG…TGGF), 120-140 (GALA…ELAL), 146-166 (AGSA…SIIF), 191-211 (LLIL…LAAL), and 242-262 (AAQQ…GNIL).

This sequence belongs to the CobS family. Mg(2+) serves as cofactor.

The protein localises to the cell inner membrane. The catalysed reaction is alpha-ribazole + adenosylcob(III)inamide-GDP = adenosylcob(III)alamin + GMP + H(+). It carries out the reaction alpha-ribazole 5'-phosphate + adenosylcob(III)inamide-GDP = adenosylcob(III)alamin 5'-phosphate + GMP + H(+). Its pathway is cofactor biosynthesis; adenosylcobalamin biosynthesis; adenosylcobalamin from cob(II)yrinate a,c-diamide: step 7/7. In terms of biological role, joins adenosylcobinamide-GDP and alpha-ribazole to generate adenosylcobalamin (Ado-cobalamin). Also synthesizes adenosylcobalamin 5'-phosphate from adenosylcobinamide-GDP and alpha-ribazole 5'-phosphate. The protein is Adenosylcobinamide-GDP ribazoletransferase of Shewanella baltica (strain OS195).